Consider the following 691-residue polypeptide: T-box transcription factor TBX2-B (691 aa).

The T-box DNA-binding region spans 104–277 (LWDQFHKIGT…HNPFAKGFRD (174 aa)). Disordered stretches follow at residues 301–440 (CKAD…SLSK) and 612–691 (NLLT…ESPK). Residues 325–335 (HSPLSAAPSPL) are compositionally biased toward low complexity. Composition is skewed to basic and acidic residues over residues 340–361 (TNREEKFGADSDQELDRREVRS), 378–402 (RLEDRGKDKSTPEKKSDSPESRKDG), and 415–433 (SLEKDKVESRRKEDSKSDP). Residues 624–639 (PGSESSKPGSSRESSP) show a composition bias toward low complexity. Residues 659-684 (SMKDSINELQRIQRLVSGLERQREVS) adopt a coiled-coil conformation. Basic and acidic residues predominate over residues 678-691 (ERQREVSPGRESPK).

In terms of assembly, binds DNA as a monomer.

The protein resides in the nucleus. In terms of biological role, transcription factor which acts as a transcriptional repressor. May also function as a transcriptional activator. Binds to the palindromic T site 5'-TTCACACCTAGGTGTGAA-3' DNA sequence, or a half-site, which are present in the regulatory region of several genes. This Xenopus laevis (African clawed frog) protein is T-box transcription factor TBX2-B (tbx2-b).